A 574-amino-acid chain; its full sequence is ATP-dependent RNA helicase HAS1 (574 aa).

The segment covering 31–47 has biased composition (low complexity); that stretch reads ATKAKASSASSSSTPAA. The tract at residues 31-53 is disordered; it reads ATKAKASSASSSSTPAAERQPFS. A Q motif motif is present at residues 50–78; that stretch reads QPFSILDLSEPTRKAIDAMGFKTMTEVQA. Residues 81-257 enclose the Helicase ATP-binding domain; that stretch reads IPPLMAGKDV…RISLRPGPLY (177 aa). 94 to 101 contacts ATP; it reads AQTGSGKT. Positions 204–207 match the DEAD box motif; that stretch reads DEAD. In terms of domain architecture, Helicase C-terminal spans 271–440; that stretch reads RLEQGYVVCE…NVQGQLEKLI (170 aa). A Bipartite nuclear localization signal motif is present at residues 283-299; it reads RRFLLLFTFLKKNAGKK. A disordered region spans residues 500-574; sequence LKTSASSSSG…GNKGGKQWSR (75 aa). The segment covering 519–528 has biased composition (acidic residues); it reads VDGEGEDADG. Residues 530 to 541 are compositionally biased toward basic and acidic residues; the sequence is INPKRQQSDRRA.

This sequence belongs to the DEAD box helicase family. DDX18/HAS1 subfamily. Associates in the nucleolus with the 60S and pre-60S ribosomal subunits.

It is found in the nucleus. The protein localises to the nucleolus. The catalysed reaction is ATP + H2O = ADP + phosphate + H(+). In terms of biological role, ATP-dependent RNA helicase involved in 40S ribosomal subunit biogenesis. Required for the processing and cleavage of 35S pre-rRNA at sites A0, A1, and A2, leading to mature 18S rRNA. The sequence is that of ATP-dependent RNA helicase HAS1 (HAS1) from Mycosarcoma maydis (Corn smut fungus).